A 326-amino-acid polypeptide reads, in one-letter code: Toluene-4-monooxygenase system, ferredoxin--NAD(+) reductase component (326 aa).

The 2Fe-2S ferredoxin-type domain maps to 1-92; it reads MFNIQSDDLL…DLKIKVINRA (92 aa). 4 residues coordinate [2Fe-2S] cluster: Cys36, Cys41, Cys44, and Cys76. Residues 95-326 form a ferredoxin-reductase region; it reads RASHPPKRFS…FEAIHFDRFF (232 aa). The FAD-binding FR-type domain maps to 100 to 195; the sequence is PKRFSTRVVS…DGPYGLSVLK (96 aa). Residues 146–149, 162–164, and 170–172 contribute to the FAD site; these read RAYS, IVK, and KVS.

It belongs to the bacterial ring-hydroxylating dioxygenase ferredoxin reductase family. In terms of assembly, monomer. The alkene monooxygenase multicomponent enzyme system is composed of an electron transfer component and a monooxygenase component interacting with the effector protein TmoD. The electron transfer component is composed of a ferredoxin reductase (TmoF) and a ferredoxin (TmoC), and the monooxygenase component is formed by a heterohexamer (dimer of heterotrimers) of two alpha subunits (TmoA), two beta subunits (TmoE) and two gamma subunits (TmoB). The cofactor is FAD. Requires [2Fe-2S] cluster as cofactor.

It catalyses the reaction 2 reduced [2Fe-2S]-[ferredoxin] + NAD(+) + H(+) = 2 oxidized [2Fe-2S]-[ferredoxin] + NADH. Its pathway is xenobiotic degradation; toluene degradation. Reductase component of the toluene-4-monooxygenase multicomponent enzyme system which catalyzes the O2- and NADH-dependent hydroxylation of toluene to form p-cresol. Ferredoxin reductase catalyzes the transfer of electrons from NADH to ferredoxin (TmoC). The protein is Toluene-4-monooxygenase system, ferredoxin--NAD(+) reductase component of Ectopseudomonas mendocina (Pseudomonas mendocina).